Here is an 85-residue protein sequence, read N- to C-terminus: Small ribosomal subunit protein uS17 (85 aa).

This sequence belongs to the universal ribosomal protein uS17 family. In terms of assembly, part of the 30S ribosomal subunit.

In terms of biological role, one of the primary rRNA binding proteins, it binds specifically to the 5'-end of 16S ribosomal RNA. The polypeptide is Small ribosomal subunit protein uS17 (Agathobacter rectalis (strain ATCC 33656 / DSM 3377 / JCM 17463 / KCTC 5835 / VPI 0990) (Eubacterium rectale)).